Reading from the N-terminus, the 1000-residue chain is MEEYDLYGVEDDFESQFASELEVLAELEDDVSSRPGPQRSQLRTKLSFEEAISAGDPIRSNANSKPTGDSNGEALACIDTSKSKKRDASCIDFEEDEFSDSIYEPPITPKHKRARIEAVKKLDFGRDEYAGNSTALSDDITPPPSPNHSPKKNERDSKFSSCEAFEVSDMAPLQVTPTESEQKRVLKRPPVLEDYINVTSTDGSRVYMALKEDNDGAQQKQGNLKWNSGQQLHLLGVPFSYLKEQVNDEHRRKVLEESQRLTEMLNSQINEEFGENDSEILENDDNAGEEDDEDEPSSHSLWVDRFTPRHYTELLSDDYTNRCLLKWLKLWDTVVFGKERVVRKPKAIVDPRANHFKNQKEQQSKFKTKAQITEEILEAELDHHNRPKNKVSLLCGPPGLGKTTLAHVIARHAGYNVVEMNASDDRSPEAFRTRIEAATQMKSVLGVDERPNCLIIDEIDGAPTVSINMLLSLVNRKDAKEAEGGTEATTGKKKKKEGGLLLRPIICICNDQYVPSLRQLRQQAFMLNFPQTMPSRLVQRLYEIAVKQGMKADTGALMALCEKTENDIRSCINTLQFLHGRGKKELNMRSVQTMRIGLKDQNKGLFSVWQEIFQLPKIQRKRIGQEVATNDLHLLLGSENDSLGMLAKPPLNAVAQRFHHILHLSTSTGEYEKLTMGLYDNFLNMKVKESNFSTVCLALDWLEFTDIVNSTIMHGQNFQLMRYLPFLPVAFHLLFAASNVPRIAYPSSHYEAQSKLNQMQNLLNAMVSEISPAIRTRVGPQSLVLDALCLLLDVLSPKLRPVNTQLFSTKEKQQLAELINTMLAYNLTYHQERTMEGQYVYKLDPNVEDVCRFPDLPVRKPLTYQTKQLIAREIELERMRRTEAFQQARNAGRDNTTAAAAVKTADPKGAKSAAKPAALNHEQRLENIMKKATFEEKPEKDFFGRQIVKKVAAPVTASANQEESVERRIGKAVGNSDVWFRFNEGVSNAVRRNIYIKDLL.

Disordered regions lie at residues 53-89, 130-159, and 272-301; these read SAGDPIRSNANSKPTGDSNGEALACIDTSKSKKRDAS, AGNSTALSDDITPPPSPNHSPKKNERDSKF, and EFGENDSEILENDDNAGEEDDEDEPSSHSL. Polar residues predominate over residues 60–70; it reads SNANSKPTGDS. The segment covering 272–295 has biased composition (acidic residues); sequence EFGENDSEILENDDNAGEEDDEDE. 396 to 403 contributes to the ATP binding site; sequence GPPGLGKT. The span at 888–898 shows a compositional bias: polar residues; that stretch reads ARNAGRDNTTA. The tract at residues 888 to 916 is disordered; the sequence is ARNAGRDNTTAAAAVKTADPKGAKSAAKP.

It belongs to the activator 1 small subunits family. CTF18 subfamily. In terms of assembly, component of the CTF18-RFC complex, which consists of ctf18, ctf8, dcc1, rfc2, rfc3, rfc4 and rfc5. The CTF18-RFC complex associates with pcna.

Its subcellular location is the nucleus. Chromosome cohesion factor involved in sister chromatid cohesion and fidelity of chromosome transmission. Component of one of the cell nuclear antigen loader complexes, CTF18-replication factor C (CTF18-RFC), which consists of ctf18, ctf8, dcc1, rfc2, rfc3, rfc4 and rfc5. The CTF18-RFC complex binds to single-stranded and primed DNAs and has weak ATPase activity that is stimulated by the presence of primed DNA, replication protein A (RPA) and by proliferating cell nuclear antigen (pcna). The CTF18-RFC complex catalyzes the ATP-dependent loading of pcna onto primed and gapped DNA. The protein is Chromosome transmission fidelity protein 18 homolog (chtf18) of Xenopus laevis (African clawed frog).